The following is a 180-amino-acid chain: Negative modulator of initiation of replication (180 aa).

Positions 87-88 are interaction with DNA; that stretch reads AV.

Belongs to the SeqA family. In terms of assembly, homodimer. Polymerizes to form helical filaments.

It localises to the cytoplasm. Negative regulator of replication initiation, which contributes to regulation of DNA replication and ensures that replication initiation occurs exactly once per chromosome per cell cycle. Binds to pairs of hemimethylated GATC sequences in the oriC region, thus preventing assembly of replication proteins and re-initiation at newly replicated origins. Repression is relieved when the region becomes fully methylated. In Ferrimonas balearica (strain DSM 9799 / CCM 4581 / KCTC 23876 / PAT), this protein is Negative modulator of initiation of replication.